The chain runs to 229 residues: Large ribosomal subunit protein uL1 (229 aa).

This sequence belongs to the universal ribosomal protein uL1 family. As to quaternary structure, part of the 50S ribosomal subunit.

Binds directly to 23S rRNA. The L1 stalk is quite mobile in the ribosome, and is involved in E site tRNA release. Its function is as follows. Protein L1 is also a translational repressor protein, it controls the translation of the L11 operon by binding to its mRNA. The protein is Large ribosomal subunit protein uL1 of Ureaplasma parvum serovar 3 (strain ATCC 27815 / 27 / NCTC 11736).